Reading from the N-terminus, the 178-residue chain is Acireductone dioxygenase (178 aa).

4 residues coordinate Fe(2+): histidine 82, histidine 84, glutamate 88, and histidine 127. Residues histidine 82, histidine 84, glutamate 88, and histidine 127 each contribute to the Ni(2+) site. Position 157 is a phosphoserine (serine 157).

Belongs to the acireductone dioxygenase (ARD) family. The cofactor is Fe(2+). Ni(2+) is required as a cofactor.

Its subcellular location is the cytoplasm. It localises to the nucleus. The catalysed reaction is 1,2-dihydroxy-5-(methylsulfanyl)pent-1-en-3-one + O2 = 4-methylsulfanyl-2-oxobutanoate + formate + 2 H(+). It carries out the reaction 1,2-dihydroxy-5-(methylsulfanyl)pent-1-en-3-one + O2 = 3-(methylsulfanyl)propanoate + CO + formate + 2 H(+). The protein operates within amino-acid biosynthesis; L-methionine biosynthesis via salvage pathway; L-methionine from S-methyl-5-thio-alpha-D-ribose 1-phosphate: step 5/6. Catalyzes 2 different reactions between oxygen and the acireductone 1,2-dihydroxy-3-keto-5-methylthiopentene (DHK-MTPene) depending upon the metal bound in the active site. Fe-containing acireductone dioxygenase (Fe-ARD) produces formate and 2-keto-4-methylthiobutyrate (KMTB), the alpha-ketoacid precursor of methionine in the methionine recycle pathway. Ni-containing acireductone dioxygenase (Ni-ARD) produces methylthiopropionate, carbon monoxide and formate, and does not lie on the methionine recycle pathway. This is Acireductone dioxygenase (adi1) from Schizosaccharomyces pombe (strain 972 / ATCC 24843) (Fission yeast).